Here is a 122-residue protein sequence, read N- to C-terminus: MRQIAEMRKEVSQHGFDVRMMEVPGMKVAIAGDGEVNYLFMLLPFRDKFKLKKRDVWLFKKLSYKFQARPFMVTFDKMLSFYPLHALEEAGEHFELDIRNSRGLMFSFDTIVSEQLQQRLVV.

This is an uncharacterized protein from Methanothermobacter thermautotrophicus (Methanobacterium thermoformicicum).